We begin with the raw amino-acid sequence, 460 residues long: ATP synthase subunit beta (460 aa).

Residue 150-157 (GGAGVGKT) participates in ATP binding.

It belongs to the ATPase alpha/beta chains family. In terms of assembly, F-type ATPases have 2 components, CF(1) - the catalytic core - and CF(0) - the membrane proton channel. CF(1) has five subunits: alpha(3), beta(3), gamma(1), delta(1), epsilon(1). CF(0) has three main subunits: a(1), b(2) and c(9-12). The alpha and beta chains form an alternating ring which encloses part of the gamma chain. CF(1) is attached to CF(0) by a central stalk formed by the gamma and epsilon chains, while a peripheral stalk is formed by the delta and b chains.

It localises to the cell inner membrane. It catalyses the reaction ATP + H2O + 4 H(+)(in) = ADP + phosphate + 5 H(+)(out). Functionally, produces ATP from ADP in the presence of a proton gradient across the membrane. The catalytic sites are hosted primarily by the beta subunits. The polypeptide is ATP synthase subunit beta (Shigella dysenteriae serotype 1 (strain Sd197)).